Reading from the N-terminus, the 93-residue chain is Pyrimidine/purine nucleoside phosphorylase (93 aa).

This sequence belongs to the nucleoside phosphorylase PpnP family.

It catalyses the reaction a purine D-ribonucleoside + phosphate = a purine nucleobase + alpha-D-ribose 1-phosphate. The enzyme catalyses adenosine + phosphate = alpha-D-ribose 1-phosphate + adenine. It carries out the reaction cytidine + phosphate = cytosine + alpha-D-ribose 1-phosphate. The catalysed reaction is guanosine + phosphate = alpha-D-ribose 1-phosphate + guanine. It catalyses the reaction inosine + phosphate = alpha-D-ribose 1-phosphate + hypoxanthine. The enzyme catalyses thymidine + phosphate = 2-deoxy-alpha-D-ribose 1-phosphate + thymine. It carries out the reaction uridine + phosphate = alpha-D-ribose 1-phosphate + uracil. The catalysed reaction is xanthosine + phosphate = alpha-D-ribose 1-phosphate + xanthine. Functionally, catalyzes the phosphorolysis of diverse nucleosides, yielding D-ribose 1-phosphate and the respective free bases. Can use uridine, adenosine, guanosine, cytidine, thymidine, inosine and xanthosine as substrates. Also catalyzes the reverse reactions. The protein is Pyrimidine/purine nucleoside phosphorylase of Pseudoalteromonas atlantica (strain T6c / ATCC BAA-1087).